A 442-amino-acid chain; its full sequence is D-serine dehydratase (442 aa).

Residue lysine 118 is modified to N6-(pyridoxal phosphate)lysine.

The protein belongs to the serine/threonine dehydratase family. DsdA subfamily. As to quaternary structure, monomer. Pyridoxal 5'-phosphate is required as a cofactor.

The enzyme catalyses D-serine = pyruvate + NH4(+). The protein is D-serine dehydratase of Escherichia coli O157:H7.